Here is a 240-residue protein sequence, read N- to C-terminus: Transcription factor bHLH101 (240 aa).

A bHLH domain is found at 65 to 117; that stretch reads EKKLNHNASERDRRRKLNALYSSLRALLPLSDQKRKLSIPMTVARVVKYIPEQ.

In terms of assembly, homodimer. As to expression, flowers.

The protein localises to the nucleus. The protein is Transcription factor bHLH101 (BHLH101) of Arabidopsis thaliana (Mouse-ear cress).